The chain runs to 1561 residues: Adhesion G protein-coupled receptor B2 (1561 aa).

A signal peptide spans 1-20 (MTPACPLLLSVILSLRLATA). The Extracellular portion of the chain corresponds to 21–930 (FDPAPSACSA…ELAGAPSVPL (910 aa)). Residues N94, N182, and N183 are each glycosylated (N-linked (GlcNAc...) asparagine). S257 carries O-linked (Xyl...) (chondroitin sulfate) serine glycosylation. 4 TSP type-1 domains span residues 300–353 (DPAA…ATCP), 355–408 (HGVW…AACP), 410–463 (EGQW…LDCP), and 466–519 (DGKW…KRCP). Cystine bridges form between C312–C346, C316–C352, C327–C336, C367–C402, C371–C407, C382–C392, C422–C457, C426–C462, C437–C447, C478–C513, C482–C518, C493–C503, C525–C560, and C548–C578. N347 carries an N-linked (GlcNAc...) asparagine glycan. N-linked (GlcNAc...) asparagine glycosylation occurs at N428. N551 and N636 each carry an N-linked (GlcNAc...) asparagine glycan. The GAIN-B domain occupies 748–918 (DRLFLPKEVL…AVLAQPPKDL (171 aa)). Positions 757-797 (LSLSSPGKPATPGAATAGSPGRGRGPGTVPPGPGHAHQRLL) are disordered. The segment covering 760–775 (SSPGKPATPGAATAGS) has biased composition (low complexity). The N-linked (GlcNAc...) asparagine glycan is linked to N861. 2 disulfides stabilise this stretch: C868-C900 and C888-C902. Positions 868–918 (CASWDYSRADTNSGDWNTESCQTLETQAAHTRCQCQHLSTFAVLAQPPKDL) are GPS. A helical membrane pass occupies residues 931-951 (VIGCAVSCMALLTLLAIYAAF). Over 952 to 959 (WRFIKSER) the chain is Cytoplasmic. Residues 960-980 (SIILLNFCLSILASNILILVG) form a helical membrane-spanning segment. Residues 981-988 (QSRVLSKG) are Extracellular-facing. The helical transmembrane segment at 989–1009 (VCTMTAAFLHFFFLSSFCWVL) threads the bilayer. Residues 1010–1030 (TEAWQSYLAVIGRMRTRLVRK) lie on the Cytoplasmic side of the membrane. Residues 1031 to 1051 (RFLCLGWGLPALVVAVSVGFT) form a helical membrane-spanning segment. The Extracellular segment spans residues 1052–1072 (RTKGYGTSSYCWLSLEGGLLY). Residues 1073 to 1093 (AFVGPAAVIVLVNMLIGIIVF) traverse the membrane as a helical segment. The Cytoplasmic portion of the chain corresponds to 1094-1115 (NKLMARDGVSDKSKKQRAGSER). Residues 1116 to 1136 (CPWASLLLPCSACGAVPSPLL) form a helical membrane-spanning segment. The Extracellular portion of the chain corresponds to 1137-1147 (SSASARNAMAS). A helical membrane pass occupies residues 1148–1168 (LWSSCVVLPLLALTWMSAVLA). Residues 1169 to 1561 (MTDRRSVLFQ…PPDGDFQTEV (393 aa)) lie on the Cytoplasmic side of the membrane. Phosphotyrosine is present on Y1345. Disordered stretches follow at residues 1355–1377 (LQPGGGGTAGEEAPRARPEGTPR), 1417–1447 (FQPPPPTPSARQVPEPGERSRTMPRTVPGST), and 1491–1561 (RYRS…QTEV). The segment covering 1366 to 1376 (EAPRARPEGTP) has biased composition (basic and acidic residues). Residues 1491–1502 (RYRSQSSAKEKP) are compositionally biased toward basic and acidic residues. Over residues 1519 to 1528 (SWSTFKSMTL) the composition is skewed to polar residues. Over residues 1551-1561 (EPPDGDFQTEV) the composition is skewed to acidic residues.

The protein belongs to the G-protein coupled receptor 2 family. Adhesion G-protein coupled receptor (ADGR) subfamily. In terms of assembly, heterodimer of 2 chains generated by proteolytic processing; the large extracellular N-terminal fragment and the membrane-bound C-terminal fragment predominantly remain associated and non-covalently linked. Interacts with GABPB2. Interacts (via carboxy-terminus) with TAX1BP3. Interacts with GNAZ. Interacts with SH3GL2. Glycosylated. In terms of processing, autoproteolytically processed at the GPS region of the GAIN-B domain; this cleavage modulates receptor activity. Additionally, furin is involved in the cleavage at another site, in the middle of the extracellular domain, generating a soluble fragment. Specifically expressed in the brain. The peak level in the brain is observed 10 days after birth.

The protein localises to the cell membrane. Its subcellular location is the secreted. Receptor activity is regulated by proteolytic processing. The long N-terminal has a an inhibitory effect on the constitutive signaling activity. Removal of the N-terminal region induces an increase of the receptor activity. Functionally, orphan G-protein coupled receptor involved in cell adhesion and probably in cell-cell interactions. Activates NFAT-signaling pathway, a transcription factor, via the G-protein GNAZ. Involved in angiogenesis inhibition. In Mus musculus (Mouse), this protein is Adhesion G protein-coupled receptor B2 (Adgrb2).